The sequence spans 804 residues: Leucine--tRNA ligase (804 aa).

A 'HIGH' region motif is present at residues 40 to 51; it reads PYPSGAGLHVGH. The 'KMSKS' region signature appears at 576–580; that stretch reads KMSKS. K579 serves as a coordination point for ATP.

This sequence belongs to the class-I aminoacyl-tRNA synthetase family.

It localises to the cytoplasm. The catalysed reaction is tRNA(Leu) + L-leucine + ATP = L-leucyl-tRNA(Leu) + AMP + diphosphate. The sequence is that of Leucine--tRNA ligase from Staphylococcus haemolyticus (strain JCSC1435).